Reading from the N-terminus, the 247-residue chain is MNNADELTLDLPNFTGPLDLLLHLIRSQKIDIYDIPIAKITGQYLANLARWQTLDLQIAGEYFVMASTLLRIKSQYLLPKNDFVEEDQYQEDPRAELVEQLVQYSVFQRIAEYFKKRDEEMPITVAKDPSVSPKKKVEPLPLGEITSDELANTFKVVLERFKLRKPQVGQIEVHEASIEEMTTFLKDKLHHRKSTSFFDCIKNFQDLDQVIGLFLAVLELCRDHKILVKQNRDFGDLELEKVETNGK.

This sequence belongs to the ScpA family. As to quaternary structure, component of a cohesin-like complex composed of ScpA, ScpB and the Smc homodimer, in which ScpA and ScpB bind to the head domain of Smc. The presence of the three proteins is required for the association of the complex with DNA.

Its subcellular location is the cytoplasm. Functionally, participates in chromosomal partition during cell division. May act via the formation of a condensin-like complex containing Smc and ScpB that pull DNA away from mid-cell into both cell halves. The chain is Segregation and condensation protein A from Lactobacillus gasseri (strain ATCC 33323 / DSM 20243 / BCRC 14619 / CIP 102991 / JCM 1131 / KCTC 3163 / NCIMB 11718 / NCTC 13722 / AM63).